The chain runs to 180 residues: MKQLLDFLPLVVFFVCYKLYDIYVASGALVAATAVALVLTWLKYRRVEKMTLITFIMVAIFGTLTLVFHNDLFIKWKVTVIYTLFALALLISQVVLKKPLIQRMLGKELQLPDSVWSRLNAAWALFFLGCGLANIYVAFWLPQSVWVDFKVFGLTALTLVFTLLSGIYIYRNMSEEQKHS.

A run of 5 helical transmembrane segments spans residues 22-42, 50-70, 76-96, 121-141, and 149-169; these read IYVA…LTWL, MTLI…VFHN, WKVT…QVVL, AAWA…AFWL, and FKVF…GIYI.

The protein belongs to the YciB family.

The protein localises to the cell inner membrane. Functionally, plays a role in cell envelope biogenesis, maintenance of cell envelope integrity and membrane homeostasis. The polypeptide is Inner membrane-spanning protein YciB (Edwardsiella ictaluri (strain 93-146)).